Here is a 300-residue protein sequence, read N- to C-terminus: uncharacterized protein (300 aa).

The a divalent metal cation site is built by glutamate 146, glutamate 148, and aspartate 177.

This sequence belongs to the FAH family.

This is an uncharacterized protein from Staphylococcus aureus (strain MW2).